The sequence spans 374 residues: Putative F-box/kelch-repeat protein At4g39756 (374 aa).

Residues 17 to 63 (CPSFLSLPEEILVNCLARIPKSYYPKLSLVCKSFCSLILSMELYVER) form the F-box domain. 4 Kelch repeats span residues 135–180 (ELYA…VING), 181–227 (KIYV…GMAV), 231–278 (KIYV…RQSC), and 280–308 (WYDT…ILEV).

This Arabidopsis thaliana (Mouse-ear cress) protein is Putative F-box/kelch-repeat protein At4g39756.